Here is a 1755-residue protein sequence, read N- to C-terminus: Transposon Ty1-MR2 Gag-Pol polyprotein (1755 aa).

Polar residues-rich tracts occupy residues 1-10 (MESQQLSNYP), 48-60 (TKANSQQTTTPAS), and 127-152 (QSQFPQYPSSVGTPLSTPSPESGNTF). Disordered stretches follow at residues 1 to 93 (MESQ…MMTQ), 126 to 173 (PQSQ…RPPP), and 352 to 421 (GSRN…SKST). The segment covering 153–165 (TDSSSADSDMTST) has biased composition (low complexity). Residues 299 to 401 (NNGIHINNKV…NSKSKTARAH (103 aa)) are RNA-binding. A compositionally biased stretch (low complexity) spans 402-418 (NVSTSNNSPSTDNDSIS). Residue serine 416 is modified to Phosphoserine. Residue aspartate 461 is the For protease activity; shared with dimeric partner of the active site. The integrase-type zinc finger-like stretch occupies residues 583–640 (NVHTSESTRKYPYPFIHRMLAHANAQTIRYSLKNNTITYFNESDVDWSSAIDYQCPDC). One can recognise an Integrase catalytic domain in the interval 660–835 (NSYEPFQYLH…AGLDISTLLP (176 aa)). The Mg(2+) site is built by aspartate 671 and aspartate 736. Disordered regions lie at residues 956–1087 (SKAV…ETEK), 1092–1111 (RSPSIDASPPENNSSHNIVP), and 1130–1186 (DLPL…EDNE). Positions 960–969 (SPTDSTPPST) are enriched in low complexity. Positions 1005–1015 (STPQISNIEST) are enriched in polar residues. A compositionally biased stretch (basic and acidic residues) spans 1038 to 1053 (ESSHASKSKDFRHSDS). Polar residues-rich tracts occupy residues 1054 to 1082 (YSENETNHTNVPISSTGGTNNKTVPQISD) and 1101 to 1111 (PENNSSHNIVP). A Bipartite nuclear localization signal motif is present at residues 1178–1212 (KKRSLEDNETEIKVSRDTWNTKNMRSLEPPRSKKR). One can recognise a Reverse transcriptase Ty1/copia-type domain in the interval 1338-1476 (NNYYITQLDI…DILGLEIKYQ (139 aa)). Residues aspartate 1346, aspartate 1427, aspartate 1428, aspartate 1610, glutamate 1652, and aspartate 1685 each contribute to the Mg(2+) site. An RNase H Ty1/copia-type domain is found at 1610–1752 (DASYGNQPYY…IKTFKLLTNK (143 aa)).

In terms of assembly, the capsid protein forms a homotrimer, from which the VLPs are assembled. The protease is a homodimer, whose active site consists of two apposed aspartic acid residues. Initially, virus-like particles (VLPs) are composed of the structural unprocessed proteins Gag and Gag-Pol, and also contain the host initiator methionine tRNA (tRNA(i)-Met) which serves as a primer for minus-strand DNA synthesis, and a dimer of genomic Ty RNA. Processing of the polyproteins occurs within the particle and proceeds by an ordered pathway, called maturation. First, the protease (PR) is released by autocatalytic cleavage of the Gag-Pol polyprotein yielding capsid protein p45 and a Pol-p154 precursor protein. This cleavage is a prerequisite for subsequent processing of Pol-p154 at the remaining sites to release the mature structural and catalytic proteins. Maturation takes place prior to the RT reaction and is required to produce transposition-competent VLPs.

The protein localises to the cytoplasm. Its subcellular location is the nucleus. It catalyses the reaction DNA(n) + a 2'-deoxyribonucleoside 5'-triphosphate = DNA(n+1) + diphosphate. The catalysed reaction is Endonucleolytic cleavage to 5'-phosphomonoester.. Its function is as follows. Capsid protein (CA) is the structural component of the virus-like particle (VLP), forming the shell that encapsulates the retrotransposons dimeric RNA genome. The particles are assembled from trimer-clustered units and there are holes in the capsid shells that allow for the diffusion of macromolecules. CA also has nucleocapsid-like chaperone activity, promoting primer tRNA(i)-Met annealing to the multipartite primer-binding site (PBS), dimerization of Ty1 RNA and initiation of reverse transcription. The aspartyl protease (PR) mediates the proteolytic cleavages of the Gag and Gag-Pol polyproteins after assembly of the VLP. In terms of biological role, reverse transcriptase/ribonuclease H (RT) is a multifunctional enzyme that catalyzes the conversion of the retro-elements RNA genome into dsDNA within the VLP. The enzyme displays a DNA polymerase activity that can copy either DNA or RNA templates, and a ribonuclease H (RNase H) activity that cleaves the RNA strand of RNA-DNA heteroduplexes during plus-strand synthesis and hydrolyzes RNA primers. The conversion leads to a linear dsDNA copy of the retrotransposon that includes long terminal repeats (LTRs) at both ends. Functionally, integrase (IN) targets the VLP to the nucleus, where a subparticle preintegration complex (PIC) containing at least integrase and the newly synthesized dsDNA copy of the retrotransposon must transit the nuclear membrane. Once in the nucleus, integrase performs the integration of the dsDNA into the host genome. The chain is Transposon Ty1-MR2 Gag-Pol polyprotein (TY1B-MR2) from Saccharomyces cerevisiae (strain ATCC 204508 / S288c) (Baker's yeast).